Here is a 125-residue protein sequence, read N- to C-terminus: Small ribosomal subunit protein uS13 (125 aa).

The tract at residues 90–125 (QRHRKGLPVRGQRTKTNARTRKGPKRTVAGKKKATK) is disordered.

Belongs to the universal ribosomal protein uS13 family. Part of the 30S ribosomal subunit. Forms a loose heterodimer with protein S19. Forms two bridges to the 50S subunit in the 70S ribosome.

Its function is as follows. Located at the top of the head of the 30S subunit, it contacts several helices of the 16S rRNA. In the 70S ribosome it contacts the 23S rRNA (bridge B1a) and protein L5 of the 50S subunit (bridge B1b), connecting the 2 subunits; these bridges are implicated in subunit movement. Contacts the tRNAs in the A and P-sites. The chain is Small ribosomal subunit protein uS13 from Bifidobacterium longum subsp. infantis (strain ATCC 15697 / DSM 20088 / JCM 1222 / NCTC 11817 / S12).